We begin with the raw amino-acid sequence, 83 residues long: Small ribosomal subunit protein bS20 (83 aa).

Positions 1–25 are disordered; that stretch reads MPNIKSAIKRVNTTHTAEERNISQK. Basic and acidic residues predominate over residues 16–25; sequence TAEERNISQK.

It belongs to the bacterial ribosomal protein bS20 family.

Binds directly to 16S ribosomal RNA. This chain is Small ribosomal subunit protein bS20, found in Staphylococcus saprophyticus subsp. saprophyticus (strain ATCC 15305 / DSM 20229 / NCIMB 8711 / NCTC 7292 / S-41).